The chain runs to 254 residues: 3-deoxy-manno-octulosonate cytidylyltransferase (254 aa).

This sequence belongs to the KdsB family.

It is found in the cytoplasm. The catalysed reaction is 3-deoxy-alpha-D-manno-oct-2-ulosonate + CTP = CMP-3-deoxy-beta-D-manno-octulosonate + diphosphate. It functions in the pathway nucleotide-sugar biosynthesis; CMP-3-deoxy-D-manno-octulosonate biosynthesis; CMP-3-deoxy-D-manno-octulosonate from 3-deoxy-D-manno-octulosonate and CTP: step 1/1. Its pathway is bacterial outer membrane biogenesis; lipopolysaccharide biosynthesis. Functionally, activates KDO (a required 8-carbon sugar) for incorporation into bacterial lipopolysaccharide in Gram-negative bacteria. In Pseudomonas putida (strain GB-1), this protein is 3-deoxy-manno-octulosonate cytidylyltransferase.